We begin with the raw amino-acid sequence, 426 residues long: Homeobox protein knotted-1-like LET12 (426 aa).

3 disordered regions span residues 1–26 (MEFQ…QQNA), 85–158 (QTSN…ENSW), and 270–290 (GVAP…DQAD). Residues 15-24 (QQQQQQQQQQ) are compositionally biased toward low complexity. Residues 104 to 114 (AGGGSNGGGSG) are compositionally biased toward gly residues. Low complexity predominate over residues 139-151 (ENNNNNNNNNNNN). Positions 327–347 (ELKHELKQGYKEKIVDIREEI) constitute an ELK domain. The homeobox; TALE-type DNA-binding region spans 348 to 411 (LRKRRAGKLP…NQRKRNWHSN (64 aa)). Residues 406-426 (RNWHSNPSTSSSQKSQTQECR) are disordered. Residues 413-426 (STSSSQKSQTQECR) are compositionally biased toward low complexity.

This sequence belongs to the TALE/KNOX homeobox family. As to expression, ubiquitously expressed in the mature plant.

The protein localises to the nucleus. In terms of biological role, may have a role to play in formative events in ovule and embryo morphogenesis. In Solanum lycopersicum (Tomato), this protein is Homeobox protein knotted-1-like LET12 (LET12).